We begin with the raw amino-acid sequence, 733 residues long: Putative cyclic nucleotide-gated ion channel 9 (733 aa).

Residues 1–117 (MLDCGKKAVK…DKFLLLCNKL (117 aa)) lie on the Cytoplasmic side of the membrane. A helical transmembrane segment spans residues 118 to 138 (FVTSCILAVSVDPLFLYLPFV). The Extracellular portion of the chain corresponds to 139–151 (KDNEKCIGIDRKL). A helical membrane pass occupies residues 152–172 (AIIATTLRTVIDAFYLFHMAL). Over 173-207 (RFRTAFVAPSSRVFGRGELVIDPAQIAKRYLQQYF) the chain is Cytoplasmic. A helical membrane pass occupies residues 208-228 (IIDFLSVLPLPQIVVWRFLYI). Over 229 to 239 (SKGASVLATKR) the chain is Extracellular. A helical transmembrane segment spans residues 240-260 (ALRSIILVQYIPRFIRLYPLS). Residues 261-280 (SELKRTAGVFAETAWAGAAY) lie on the Cytoplasmic side of the membrane. Residues 281–301 (YLLLYMLASHIVGAIWYLLAL) traverse the membrane as a helical segment. Residues 302 to 406 (ERYNGCWTKV…GQGLETSTYP (105 aa)) lie on the Extracellular side of the membrane. A helical transmembrane segment spans residues 407–427 (GEVIFSIALAIAGLLLFALLI). The Cytoplasmic portion of the chain corresponds to 428–733 (GNMQTYLQSL…EPDFSADDTS (306 aa)). Residues 513–637 (LFEN…SRQV) and glutamate 584 contribute to the a nucleoside 3',5'-cyclic phosphate site. The segment at 629 to 644 (FRRLHSRQVQHTFRFY) is calmodulin-binding. The 30-residue stretch at 649-678 (RTWAAIFIQAAWRRYVKKKKLEQLRKEEEE) folds into the IQ domain.

Belongs to the cyclic nucleotide-gated cation channel (TC 1.A.1.5) family. As to quaternary structure, homotetramer or heterotetramer.

It localises to the cell membrane. Putative cyclic nucleotide-gated ion channel. This Arabidopsis thaliana (Mouse-ear cress) protein is Putative cyclic nucleotide-gated ion channel 9 (CNGC9).